Here is a 471-residue protein sequence, read N- to C-terminus: 3-isopropylmalate dehydratase large subunit (471 aa).

3 residues coordinate [4Fe-4S] cluster: Cys347, Cys407, and Cys410.

The protein belongs to the aconitase/IPM isomerase family. LeuC type 1 subfamily. Heterodimer of LeuC and LeuD. Requires [4Fe-4S] cluster as cofactor.

The catalysed reaction is (2R,3S)-3-isopropylmalate = (2S)-2-isopropylmalate. The protein operates within amino-acid biosynthesis; L-leucine biosynthesis; L-leucine from 3-methyl-2-oxobutanoate: step 2/4. Functionally, catalyzes the isomerization between 2-isopropylmalate and 3-isopropylmalate, via the formation of 2-isopropylmaleate. This is 3-isopropylmalate dehydratase large subunit from Edwardsiella ictaluri (strain 93-146).